The sequence spans 65 residues: Kassorin-M (65 aa).

The signal sequence occupies residues 1 to 22 (MLTLKKSMLLLFFLGMVSFSLA). Positions 23 to 51 (DDKREDEAEEGEDKRADEGEEKRAAEKKR) are excised as a propeptide. The tract at residues 24-45 (DKREDEAEEGEDKRADEGEEKR) is disordered. Residue L64 is modified to Leucine amide.

It belongs to the frog skin active peptide (FSAP) family. Brevinin subfamily. Expressed by the skin glands.

Its subcellular location is the secreted. In terms of biological role, induces contraction of smooth muscle in isolated guinea pig urinary bladder (EC50=4.66 nM). Has no antimicrobial activity against the Gram-positive bacterium S.aureus, the Gram-negative bacterium E.coli and the yeast C.albicans. Elicits histamine release from rat peritoneal mast cells. This is Kassorin-M from Phlyctimantis maculatus (Red-legged running frog).